Reading from the N-terminus, the 509-residue chain is Zinc finger protein Aiolos (509 aa).

The tract at residues 1 to 85 (MEDIKPNVEL…PMGNAEEPEI (85 aa)) is disordered. Polar residues predominate over residues 10–20 (LKSTQEQSVPT). Thr20 carries the phosphothreonine modification. A compositionally biased stretch (basic and acidic residues) spans 56–72 (DSMKVKDEYSERDENVL). Residues Lys61, Lys73, and Lys100 each participate in a glycyl lysine isopeptide (Lys-Gly) (interchain with G-Cter in SUMO2) cross-link. 3 consecutive C2H2-type zinc fingers follow at residues 118–140 (MNCD…KRSH), 146–168 (FQCN…IKLH), and 174–196 (FKCH…LRTH). A C2H2-type 4; atypical zinc finger spans residues 202 to 224 (YKCEFCGRSYKQRSSLEEHKERC). Lys245 is covalently cross-linked (Glycyl lysine isopeptide (Lys-Gly) (interchain with G-Cter in SUMO2)). Thr326 bears the Phosphothreonine mark. Residues 365–421 (HLPEKSLPSERGLSPTNSGHDSTDTDSNHEERQNHIYQQNPMVPPRARNGMPLLKEG) are disordered. Ser378 bears the Phosphoserine mark. Residues 385–398 (DSTDTDSNHEERQN) are compositionally biased toward basic and acidic residues. The segment at 452–474 (YRCDHCRVLFLDYVMFTIHMGCH) adopts a C2H2-type 5 zinc-finger fold. Residues 452 to 504 (YRCDHCRVLFLDYVMFTIHMGCHGFRDPFECNMCGYRSHDRYEFSSHIARGEH) form a mediates homodimerization and heterodimerization region. The segment at 480–504 (FECNMCGYRSHDRYEFSSHIARGEH) adopts a C2H2-type 6; atypical zinc-finger fold.

Belongs to the Ikaros C2H2-type zinc-finger protein family. Homodimer. Heterodimer with other IKAROS family members. Interacts with IKZF4 and IKZF5. Interacts with IKZF1. Interacts with HRAS. Interacts with FOXP3; this interaction may be required for silencing target genes and regulating the suppressive activity of FOXP3-positive regulatory T-cells (Treg). Interacts with BCL21L; this interaction blocks the anti-apoptotic role of BCL21L. Associates with histone deacetylase complexes containing HDAC1, MTA2 and SIN3A.

It is found in the nucleus. It localises to the cytoplasm. Its function is as follows. Transcription factor that plays an important role in the regulation of lymphocyte differentiation. Plays an essential role in regulation of B-cell differentiation, proliferation and maturation to an effector state. Involved in regulating BCL2 expression and controlling apoptosis in T-cells in an IL2-dependent manner. The polypeptide is Zinc finger protein Aiolos (IKZF3) (Bos taurus (Bovine)).